A 179-amino-acid chain; its full sequence is Acireductone dioxygenase (179 aa).

The Fe(2+) site is built by His99, His101, Glu105, and His144. Positions 99, 101, 105, and 144 each coordinate Ni(2+).

Belongs to the acireductone dioxygenase (ARD) family. As to quaternary structure, monomer. Fe(2+) serves as cofactor. Requires Ni(2+) as cofactor.

It carries out the reaction 1,2-dihydroxy-5-(methylsulfanyl)pent-1-en-3-one + O2 = 3-(methylsulfanyl)propanoate + CO + formate + 2 H(+). The catalysed reaction is 1,2-dihydroxy-5-(methylsulfanyl)pent-1-en-3-one + O2 = 4-methylsulfanyl-2-oxobutanoate + formate + 2 H(+). The protein operates within amino-acid biosynthesis; L-methionine biosynthesis via salvage pathway; L-methionine from S-methyl-5-thio-alpha-D-ribose 1-phosphate: step 5/6. Functionally, catalyzes 2 different reactions between oxygen and the acireductone 1,2-dihydroxy-3-keto-5-methylthiopentene (DHK-MTPene) depending upon the metal bound in the active site. Fe-containing acireductone dioxygenase (Fe-ARD) produces formate and 2-keto-4-methylthiobutyrate (KMTB), the alpha-ketoacid precursor of methionine in the methionine recycle pathway. Ni-containing acireductone dioxygenase (Ni-ARD) produces methylthiopropionate, carbon monoxide and formate, and does not lie on the methionine recycle pathway. In Exiguobacterium sibiricum (strain DSM 17290 / CCUG 55495 / CIP 109462 / JCM 13490 / 255-15), this protein is Acireductone dioxygenase.